A 144-amino-acid polypeptide reads, in one-letter code: Bradykinin-potentiating and C-type natriuretic peptides isoform 2 (144 aa).

An N-terminal signal peptide occupies residues M1–G23. Residues K24–A30 constitute a propeptide that is removed on maturation. Pyrrolidone carboxylic acid is present on Q31. The propeptide occupies L41 to A47. Q48 is subject to Pyrrolidone carboxylic acid. A propeptide spanning residues L61–A67 is cleaved from the precursor. Q68 carries the pyrrolidone carboxylic acid modification. A propeptide spanning residues L78–A84 is cleaved from the precursor. Residues Q81 to P110 form a disordered region. Pyrrolidone carboxylic acid is present on Q85. A propeptide spanning residues L96 to A102 is cleaved from the precursor. A Pyrrolidone carboxylic acid modification is found at Q103. Positions A114–L116 are excised as a propeptide. Pyrrolidone carboxylic acid is present on Q117. V122 is a propeptide. Residue Q123 is modified to Pyrrolidone carboxylic acid. The propeptide occupies V128 to T144.

It in the N-terminal section; belongs to the bradykinin-potentiating peptide family. As to expression, expressed by venom gland.

It localises to the secreted. The protein localises to the cytoplasm. It is found in the cytosol. Functionally, peptide with several activities. It inhibits the activity of the angiotensin-converting enzyme (ACE) by a preferential interaction with its C-domain. It evokes transient hypotension (-14 mmHg) similar to that evoked by 0.5 ug of bradykinin, when injected alone into rats. It has a high bradykinin-potentiating effect (120%), when 60 nmol of BPP-10c are coinjected with 0.5 ug of bradykinin into rats. Does not affect angiotensin-1 pressor effects. Shows potent and long-lasting antihypertensive activity as well as a reduction of the heart rate. It also binds and dose-dependently promotes the activation of cytosolic argininosuccinate synthase (ASS1), an enzyme that catalyzes the conversion of citrulline, L-aspartate and ATP to argininosuccinate, AMP and pyrophosphate. It also enhances ASS1-dependent arginine production in HEK 293 cells, as well as in spontaneous hypertensive rat (SHR) and Wistar rat plasma. In addition, it induces the production of nitric-oxide (NO) by HUVEC cells via the endothelial nitric-oxide synthase (NOS3), which use arginine as a substrate and produce NO. It has been shown to be internalized by ASS1-expressing endothelial (HUVEC) and kidney (HEK 293) cells, and is detected homogenously distributed within the cell cytoplasm for up to 2 hours. Acts as indirect hypotensive agent. Increases leukocyte rolling flux and adhesion by five-fold in post-capillary venules, without any increments in vasodilation of arterioles. Its function is as follows. Acts as indirect hypotensive agent. Potently induces vasodilation of arterioles, with only a small increase in leukocyte rolling flux. The protein is Bradykinin-potentiating and C-type natriuretic peptides isoform 2 of Bothrops jararacussu (Jararacussu).